The chain runs to 115 residues: Splicing factor 3B subunit 6-like protein (115 aa).

Residues 9-22 (EVNSILFIKNLSFK) form an interaction with pre-mRNA branch site region. Residues 12 to 87 (SILFIKNLSF…RYLVVHYYNP (76 aa)) form the RRM domain.

Its subcellular location is the nucleus. Functionally, necessary for the splicing of pre-mRNA. The protein is Splicing factor 3B subunit 6-like protein of Schizosaccharomyces pombe (strain 972 / ATCC 24843) (Fission yeast).